We begin with the raw amino-acid sequence, 739 residues long: DNA ligase (739 aa).

The tract at residues 1–29 (MTANRPALPTRDKAVSDLSATEASDEHAA) is disordered. NAD(+) is bound by residues 51 to 55 (DADYD), 100 to 101 (SL), and Glu134. Lys136 functions as the N6-AMP-lysine intermediate in the catalytic mechanism. Arg157, Glu194, Lys311, and Lys335 together coordinate NAD(+). Residues Cys440, Cys443, Cys464, and Cys470 each coordinate Zn(2+). A disordered region spans residues 592–612 (PTEMEEASEETPPTRRRKPQG). One can recognise a BRCT domain in the interval 662-739 (ASTSPVSGKT…TEDEWFDLVG (78 aa)).

It belongs to the NAD-dependent DNA ligase family. LigA subfamily. The cofactor is Mg(2+). Mn(2+) is required as a cofactor.

It carries out the reaction NAD(+) + (deoxyribonucleotide)n-3'-hydroxyl + 5'-phospho-(deoxyribonucleotide)m = (deoxyribonucleotide)n+m + AMP + beta-nicotinamide D-nucleotide.. In terms of biological role, DNA ligase that catalyzes the formation of phosphodiester linkages between 5'-phosphoryl and 3'-hydroxyl groups in double-stranded DNA using NAD as a coenzyme and as the energy source for the reaction. It is essential for DNA replication and repair of damaged DNA. This chain is DNA ligase, found in Azorhizobium caulinodans (strain ATCC 43989 / DSM 5975 / JCM 20966 / LMG 6465 / NBRC 14845 / NCIMB 13405 / ORS 571).